Reading from the N-terminus, the 365-residue chain is NADH-quinone oxidoreductase subunit H (365 aa).

8 consecutive transmembrane segments (helical) span residues 27–47 (LLLI…LTFA), 99–119 (FLFL…WAVV), 133–153 (ALLY…IAGW), 168–188 (AAQV…VLMM), 206–226 (FLNW…ISGV), 268–288 (ILVA…PVDI), 294–314 (IPGV…FLWF), and 329–349 (LGWK…GAVM).

It belongs to the complex I subunit 1 family. As to quaternary structure, NDH-1 is composed of 14 different subunits. Subunits NuoA, H, J, K, L, M, N constitute the membrane sector of the complex.

The protein localises to the cell inner membrane. It carries out the reaction a quinone + NADH + 5 H(+)(in) = a quinol + NAD(+) + 4 H(+)(out). Functionally, NDH-1 shuttles electrons from NADH, via FMN and iron-sulfur (Fe-S) centers, to quinones in the respiratory chain. The immediate electron acceptor for the enzyme in this species is believed to be ubiquinone. Couples the redox reaction to proton translocation (for every two electrons transferred, four hydrogen ions are translocated across the cytoplasmic membrane), and thus conserves the redox energy in a proton gradient. This subunit may bind ubiquinone. In Nitrosomonas eutropha (strain DSM 101675 / C91 / Nm57), this protein is NADH-quinone oxidoreductase subunit H.